The following is a 380-amino-acid chain: Transmembrane protein 229A (380 aa).

Residues 1–40 form a disordered region; sequence MAGSDVDSEGPARRGGAARRPGAPGGPGSEAAAGCPEPLS. A run of 2 helical transmembrane segments spans residues 51–71 and 117–137; these read LPAWMRLYFYGMHGITLDVLV and AFVFNFLLYPSAHVGLQTLAG. Positions 188-236 are disordered; that stretch reads RQQQQQQQQQQQQRRGALPVPPGARVPTAAGARRRRPRGPRGAGGAPSQ. The span at 190–202 shows a compositional bias: low complexity; sequence QQQQQQQQQQQRR. 4 helical membrane passes run 244 to 264, 278 to 298, 310 to 330, and 343 to 363; these read FLFFGMHGFLDEIFFTFFFNV, LWSFFMYGSCSFVVEKLYFHL, VPIYVIFIYVWELSWGLGLRT, and LNFMGLITLMYLPGWIFLSVY.

The protein belongs to the TMEM229 family.

It is found in the membrane. The protein is Transmembrane protein 229A (TMEM229A) of Homo sapiens (Human).